The chain runs to 257 residues: Acetylglutamate kinase (257 aa).

Substrate contacts are provided by residues 43-44 (GG), R65, and N157. ATP-binding positions include 180 to 185 (DVSGIL) and 208 to 210 (IIT).

Belongs to the acetylglutamate kinase family. ArgB subfamily. In terms of assembly, homodimer.

Its subcellular location is the cytoplasm. The enzyme catalyses N-acetyl-L-glutamate + ATP = N-acetyl-L-glutamyl 5-phosphate + ADP. Its pathway is amino-acid biosynthesis; L-arginine biosynthesis; N(2)-acetyl-L-ornithine from L-glutamate: step 2/4. Functionally, catalyzes the ATP-dependent phosphorylation of N-acetyl-L-glutamate. This Proteus mirabilis (strain HI4320) protein is Acetylglutamate kinase.